The chain runs to 624 residues: Polygalacturonase 1 beta-like protein 2 (624 aa).

A signal peptide spans 1–26 (MNNIEATLFLCFFCIFSSSNVHFAGA). One copy of the FXXY 1 repeat lies at 121–124 (FAAY). N128 carries N-linked (GlcNAc...) asparagine glycosylation. FXXY repeat units follow at residues 129–132 (FTNY), 143–146 (FKNY), 157–160 (FRRY), 171–174 (FTNY), 185–188 (FTTY), 199–202 (FTNY), 213–216 (FTSY), 227–230 (FTTY), 241–244 (FTSY), 255–258 (FSGY), and 269–272 (FTKY). An N-linked (GlcNAc...) asparagine glycan is attached at N145. The tract at residues 199-219 (FTNYNTDANEPNGRFTSYSDK) is disordered. N-linked (GlcNAc...) asparagine glycosylation occurs at N280. FXXY repeat units lie at residues 283–286 (FTSY), 297–300 (FKGY), 311–314 (FKNY), 325–328 (FSSY), and 339–342 (FVNY). Residue N352 is glycosylated (N-linked (GlcNAc...) asparagine). Residues 353–356 (FTGY) form an FXXY 18 repeat. N364 is a glycosylation site (N-linked (GlcNAc...) asparagine). FXXY repeat units lie at residues 367-370 (FKTY), 376-379 (FKVY), and 386-389 (FARY). N392 and N463 each carry an N-linked (GlcNAc...) asparagine glycan. The region spanning 409-623 (FFREAMLKEG…FENDMTWNII (215 aa)) is the BURP domain.

Expressed in flowers and stems.

It localises to the secreted. The protein resides in the extracellular space. Its subcellular location is the apoplast. The protein localises to the cell wall. Functionally, involved in cell size determination. This Arabidopsis thaliana (Mouse-ear cress) protein is Polygalacturonase 1 beta-like protein 2.